Here is a 156-residue protein sequence, read N- to C-terminus: S-ribosylhomocysteine lyase (156 aa).

Positions 56, 60, and 123 each coordinate Fe cation.

Belongs to the LuxS family. As to quaternary structure, homodimer. The cofactor is Fe cation.

The enzyme catalyses S-(5-deoxy-D-ribos-5-yl)-L-homocysteine = (S)-4,5-dihydroxypentane-2,3-dione + L-homocysteine. In terms of biological role, involved in the synthesis of autoinducer 2 (AI-2) which is secreted by bacteria and is used to communicate both the cell density and the metabolic potential of the environment. The regulation of gene expression in response to changes in cell density is called quorum sensing. Catalyzes the transformation of S-ribosylhomocysteine (RHC) to homocysteine (HC) and 4,5-dihydroxy-2,3-pentadione (DPD). The sequence is that of S-ribosylhomocysteine lyase from Staphylococcus haemolyticus (strain JCSC1435).